Reading from the N-terminus, the 213-residue chain is Kynurenine formamidase (213 aa).

Trp18 is a binding site for substrate. His48, His52, and Asp54 together coordinate Zn(2+). His58 acts as the Proton donor/acceptor in catalysis. Zn(2+) contacts are provided by His160 and Glu172.

It belongs to the Cyclase 1 superfamily. KynB family. Homodimer. Zn(2+) serves as cofactor.

The catalysed reaction is N-formyl-L-kynurenine + H2O = L-kynurenine + formate + H(+). It participates in amino-acid degradation; L-tryptophan degradation via kynurenine pathway; L-kynurenine from L-tryptophan: step 2/2. Functionally, catalyzes the hydrolysis of N-formyl-L-kynurenine to L-kynurenine, the second step in the kynurenine pathway of tryptophan degradation. This chain is Kynurenine formamidase, found in Burkholderia cenocepacia (strain ATCC BAA-245 / DSM 16553 / LMG 16656 / NCTC 13227 / J2315 / CF5610) (Burkholderia cepacia (strain J2315)).